Consider the following 342-residue polypeptide: Glucokinase (342 aa).

7 to 12 (GDIGGT) is an ATP binding site.

The protein belongs to the bacterial glucokinase family.

It localises to the cytoplasm. The catalysed reaction is D-glucose + ATP = D-glucose 6-phosphate + ADP + H(+). This Nostoc sp. (strain PCC 7120 / SAG 25.82 / UTEX 2576) protein is Glucokinase.